Here is a 688-residue protein sequence, read N- to C-terminus: Phosphoinositide 3-phosphatase (688 aa).

A Myotubularin phosphatase domain is found at 155 to 637 (SWDIYDPIKE…KKVQWWWQLY (483 aa)). Cysteine 397 acts as the Phosphocysteine intermediate in catalysis. Residues 647 to 668 (ELRHKRDSVPISVDKKSKEHSN) are compositionally biased toward basic and acidic residues. The interval 647 to 672 (ELRHKRDSVPISVDKKSKEHSNSDGG) is disordered.

Belongs to the protein-tyrosine phosphatase family. Non-receptor class myotubularin subfamily.

The protein localises to the cytoplasm. The catalysed reaction is a 1,2-diacyl-sn-glycero-3-phospho-(1D-myo-inositol-3-phosphate) + H2O = a 1,2-diacyl-sn-glycero-3-phospho-(1D-myo-inositol) + phosphate. Its function is as follows. Lipid phosphatase which dephosphorylates phosphatidylinositol 3-monophosphate (PI3P). Involved in the control of PI3P-dependent signaling and in the maintenance of endosomal system integrity. This Saccharomyces cerevisiae (strain ATCC 204508 / S288c) (Baker's yeast) protein is Phosphoinositide 3-phosphatase.